A 270-amino-acid chain; its full sequence is SAMP-activating enzyme E1 (270 aa).

ATP-binding positions include G42, D63, 70–74 (SNLQR), and K87. K113 is covalently cross-linked (Glycyl lysine isopeptide (Lys-Gly) (interchain with G-Cter in SAMP2)). 131-132 (DN) lines the ATP pocket. Positions 171 and 174 each coordinate Zn(2+). Residue C188 is the Glycyl thioester intermediate of the active site. C245 and C248 together coordinate Zn(2+).

Belongs to the HesA/MoeB/ThiF family. As to quaternary structure, interacts with NcsA. Zn(2+) is required as a cofactor. Sampylated at Lys-113 with the archaeal ubiquitin-like protein SAMP2. Also sampylated with SAMP1.

It catalyses the reaction [small archaeal modifier protein]-C-terminal Gly-Gly + ATP + H(+) = [small archaeal modifier protein]-C-terminal Gly-Gly-AMP + diphosphate. Functionally, likely activates multiple ubiquitin-like SAMPs for protein conjugation as well as for sulfur transfer, via ATP-dependent adenylation at their C-terminus. In fact, it is required for the formation of all three SAMP1-, SAMP2- and SAMP3-protein conjugates, and for molybdenum cofactor (MoCo) biosynthesis and thiolation of tRNAs. The chain is SAMP-activating enzyme E1 (ubaA) from Haloferax volcanii (strain ATCC 29605 / DSM 3757 / JCM 8879 / NBRC 14742 / NCIMB 2012 / VKM B-1768 / DS2) (Halobacterium volcanii).